Reading from the N-terminus, the 360-residue chain is Biotin synthase (360 aa).

Residues 1 to 25 (MQHAPLNFVPDAAKVPPTPGQSPNA) form a disordered region. Positions 58-285 (NAVQLSTLLS…KAMVRLSAGR (228 aa)) constitute a Radical SAM core domain. [4Fe-4S] cluster contacts are provided by Cys-73, Cys-77, and Cys-80. Residues Cys-117, Cys-148, Cys-208, and Arg-280 each contribute to the [2Fe-2S] cluster site. Residues 340–360 (QAEGAQHSHSSHCHIDITPAD) form a disordered region.

Belongs to the radical SAM superfamily. Biotin synthase family. In terms of assembly, homodimer. It depends on [4Fe-4S] cluster as a cofactor. The cofactor is [2Fe-2S] cluster.

The catalysed reaction is (4R,5S)-dethiobiotin + (sulfur carrier)-SH + 2 reduced [2Fe-2S]-[ferredoxin] + 2 S-adenosyl-L-methionine = (sulfur carrier)-H + biotin + 2 5'-deoxyadenosine + 2 L-methionine + 2 oxidized [2Fe-2S]-[ferredoxin]. The protein operates within cofactor biosynthesis; biotin biosynthesis; biotin from 7,8-diaminononanoate: step 2/2. Functionally, catalyzes the conversion of dethiobiotin (DTB) to biotin by the insertion of a sulfur atom into dethiobiotin via a radical-based mechanism. The chain is Biotin synthase from Ralstonia nicotianae (strain ATCC BAA-1114 / GMI1000) (Ralstonia solanacearum).